The sequence spans 121 residues: Small ribosomal subunit protein bS16 (121 aa).

Residues 88 to 121 (GKAKLEKEKKAKAKTKEEENEGSKTESGSNEAES) are disordered. The span at 90–111 (AKLEKEKKAKAKTKEEENEGSK) shows a compositional bias: basic and acidic residues. The span at 112–121 (TESGSNEAES) shows a compositional bias: polar residues.

Belongs to the bacterial ribosomal protein bS16 family.

The chain is Small ribosomal subunit protein bS16 from Prochlorococcus marinus (strain MIT 9215).